Reading from the N-terminus, the 192-residue chain is MRRFVVVGHRAVTTPKFSLNDLPGGAGRMDIIARCVNASLFLSHDLRRDVEFFAILLGEPTPPVTIKFSGEHVRYLSPDERSPAALIKKALERGIPVEGEAEATPGVYISKRSFADLINGMDNLVYLHEDGEDIRSVELTGNETFVLSDHQNLTPEEEAVLEAKGAKKVSLGKKLYHADHCIVMVNWETDRR.

Residues Leu-127 and Cys-181 each contribute to the S-adenosyl-L-methionine site.

This sequence belongs to the methyltransferase superfamily. TrmY family. As to quaternary structure, homodimer.

It is found in the cytoplasm. The enzyme catalyses pseudouridine(54) in tRNA + S-adenosyl-L-methionine = N(1)-methylpseudouridine(54) in tRNA + S-adenosyl-L-homocysteine + H(+). Functionally, specifically catalyzes the N1-methylation of pseudouridine at position 54 (Psi54) in tRNAs. The sequence is that of tRNA (pseudouridine(54)-N(1))-methyltransferase from Methanocella arvoryzae (strain DSM 22066 / NBRC 105507 / MRE50).